The chain runs to 421 residues: UDP-N-acetylglucosamine 1-carboxyvinyltransferase (421 aa).

Position 24-25 (24-25 (KN)) interacts with phosphoenolpyruvate. Arg93 serves as a coordination point for UDP-N-acetyl-alpha-D-glucosamine. Cys117 (proton donor) is an active-site residue. Cys117 is subject to 2-(S-cysteinyl)pyruvic acid O-phosphothioketal. Asp307 and Ile329 together coordinate UDP-N-acetyl-alpha-D-glucosamine.

The protein belongs to the EPSP synthase family. MurA subfamily.

The protein localises to the cytoplasm. It carries out the reaction phosphoenolpyruvate + UDP-N-acetyl-alpha-D-glucosamine = UDP-N-acetyl-3-O-(1-carboxyvinyl)-alpha-D-glucosamine + phosphate. It participates in cell wall biogenesis; peptidoglycan biosynthesis. Cell wall formation. Adds enolpyruvyl to UDP-N-acetylglucosamine. This Blochmanniella pennsylvanica (strain BPEN) protein is UDP-N-acetylglucosamine 1-carboxyvinyltransferase.